The following is a 281-amino-acid chain: Elongation factor 1-delta (281 aa).

A2 is modified (N-acetylalanine). K17 bears the N6-acetyllysine mark. Residues S37, E40, S44, and S60 each carry the phosphoserine modification. T73 carries the post-translational modification Phosphothreonine. The interval 80–115 is leucine-zipper; it reads LVVRIASLEVENQSLRGVVQELQQAISKLEARLNVL. Residues S86, N91, L94, and S106 each carry the phosphoserine modification. At K107 the chain carries N6-acetyllysine. K117 carries the N6-acetyllysine; alternate modification. N6-succinyllysine; alternate is present on K117. A disordered region spans residues 118 to 172; sequence SSPGHRATAPQTQHVSPMRQVEPPAKKPATPAEDDEDDDIDLFGSDNEEEDKEAA. S119 carries the phosphoserine modification. The residue at position 129 (T129) is a Phosphothreonine. Position 133 is a phosphoserine (S133). Residue T147 is modified to Phosphothreonine. The segment covering 149 to 169 has biased composition (acidic residues); the sequence is AEDDEDDDIDLFGSDNEEEDK. The residue at position 162 (S162) is a Phosphoserine; by CK2. The tract at residues 173 to 281 is catalytic (GEF); it reads QLREERLRQY…SVDIAAFNKI (109 aa).

Belongs to the EF-1-beta/EF-1-delta family. As to quaternary structure, EF-1 is composed of 4 subunits: alpha, beta, delta isoform 1, and gamma. Isoform 2 interacts with HSF1 and NFE2L2. In terms of tissue distribution, isoform 2 is specifically expressed in brain, cerebellum and testis.

It localises to the nucleus. Functionally, EF-1-beta and EF-1-delta stimulate the exchange of GDP bound to EF-1-alpha to GTP, regenerating EF-1-alpha for another round of transfer of aminoacyl-tRNAs to the ribosome. In terms of biological role, regulates induction of heat-shock-responsive genes through association with heat shock transcription factors and direct DNA-binding at heat shock promoter elements (HSE). The sequence is that of Elongation factor 1-delta (EEF1D) from Homo sapiens (Human).